The following is a 330-amino-acid chain: Ketol-acid reductoisomerase (NADP(+)) (330 aa).

The region spanning 1–181 (MNVYYEQDAD…GGAKAGVIET (181 aa)) is the KARI N-terminal Rossmann domain. NADP(+) is bound by residues 24-27 (YGSQ), Arg47, Ser50, Ser52, and 82-85 (DQYQ). Residue His107 is part of the active site. NADP(+) is bound at residue Gly133. The KARI C-terminal knotted domain maps to 182–327 (TIKNETETDL…AKLRNMMSWL (146 aa)). Asp190, Glu194, Glu226, and Glu230 together coordinate Mg(2+). Position 251 (Ser251) interacts with substrate.

This sequence belongs to the ketol-acid reductoisomerase family. Mg(2+) serves as cofactor.

It catalyses the reaction (2R)-2,3-dihydroxy-3-methylbutanoate + NADP(+) = (2S)-2-acetolactate + NADPH + H(+). The enzyme catalyses (2R,3R)-2,3-dihydroxy-3-methylpentanoate + NADP(+) = (S)-2-ethyl-2-hydroxy-3-oxobutanoate + NADPH + H(+). It functions in the pathway amino-acid biosynthesis; L-isoleucine biosynthesis; L-isoleucine from 2-oxobutanoate: step 2/4. It participates in amino-acid biosynthesis; L-valine biosynthesis; L-valine from pyruvate: step 2/4. Functionally, involved in the biosynthesis of branched-chain amino acids (BCAA). Catalyzes an alkyl-migration followed by a ketol-acid reduction of (S)-2-acetolactate (S2AL) to yield (R)-2,3-dihydroxy-isovalerate. In the isomerase reaction, S2AL is rearranged via a Mg-dependent methyl migration to produce 3-hydroxy-3-methyl-2-ketobutyrate (HMKB). In the reductase reaction, this 2-ketoacid undergoes a metal-dependent reduction by NADPH to yield (R)-2,3-dihydroxy-isovalerate. The chain is Ketol-acid reductoisomerase (NADP(+)) from Chlorobium phaeovibrioides (strain DSM 265 / 1930) (Prosthecochloris vibrioformis (strain DSM 265)).